Consider the following 604-residue polypeptide: uncharacterized protein (604 aa).

The signal sequence occupies residues 1–19; that stretch reads MIVRILLLFIALFTFGVQA.

The protein to H.influenzae HbpA.

This is an uncharacterized protein from Escherichia coli (strain K12).